Consider the following 100-residue polypeptide: Small ribosomal subunit protein uS14 (100 aa).

The protein belongs to the universal ribosomal protein uS14 family. As to quaternary structure, part of the 30S ribosomal subunit. Contacts proteins S3 and S10.

In terms of biological role, binds 16S rRNA, required for the assembly of 30S particles and may also be responsible for determining the conformation of the 16S rRNA at the A site. This is Small ribosomal subunit protein uS14 from Nostoc sp. (strain PCC 7120 / SAG 25.82 / UTEX 2576).